Here is a 549-residue protein sequence, read N- to C-terminus: Maturase K (549 aa).

It belongs to the intron maturase 2 family. MatK subfamily.

It localises to the plastid. The protein resides in the chloroplast. Usually encoded in the trnK tRNA gene intron. Probably assists in splicing its own and other chloroplast group II introns. In Albidella oligococca (Caldesia oligococca), this protein is Maturase K.